We begin with the raw amino-acid sequence, 119 residues long: Holo-[acyl-carrier-protein] synthase (119 aa).

Mg(2+) contacts are provided by Asp5 and Glu51.

The protein belongs to the P-Pant transferase superfamily. AcpS family. Requires Mg(2+) as cofactor.

Its subcellular location is the cytoplasm. It carries out the reaction apo-[ACP] + CoA = holo-[ACP] + adenosine 3',5'-bisphosphate + H(+). Its function is as follows. Transfers the 4'-phosphopantetheine moiety from coenzyme A to a Ser of acyl-carrier-protein. The polypeptide is Holo-[acyl-carrier-protein] synthase (Helicobacter pylori (strain J99 / ATCC 700824) (Campylobacter pylori J99)).